We begin with the raw amino-acid sequence, 243 residues long: Small ribosomal subunit protein uS2c (243 aa).

It belongs to the universal ribosomal protein uS2 family.

It localises to the plastid. The protein localises to the chloroplast. The sequence is that of Small ribosomal subunit protein uS2c (rps2) from Cyanidium caldarium (Red alga).